The sequence spans 453 residues: Ribose 1,5-bisphosphate phosphokinase PhnN (453 aa).

The tract at residues methionine 1–leucine 21 is disordered. The unknown stretch occupies residues methionine 1–proline 271. The tract at residues histidine 272–lysine 453 is ribose 1,5-bisphosphokinase.

The protein in the C-terminal section; belongs to the ribose 1,5-bisphosphokinase family.

The enzyme catalyses alpha-D-ribose 1,5-bisphosphate + ATP = 5-phospho-alpha-D-ribose 1-diphosphate + ADP. The protein operates within metabolic intermediate biosynthesis; 5-phospho-alpha-D-ribose 1-diphosphate biosynthesis; 5-phospho-alpha-D-ribose 1-diphosphate from D-ribose 5-phosphate (route II): step 3/3. Its function is as follows. Catalyzes the phosphorylation of ribose 1,5-bisphosphate to 5-phospho-D-ribosyl alpha-1-diphosphate (PRPP). In Janthinobacterium sp. (strain Marseille) (Minibacterium massiliensis), this protein is Ribose 1,5-bisphosphate phosphokinase PhnN (phnN).